The primary structure comprises 425 residues: MLDLKRIRTDFDAVAAKLKTRGVSEDTLTTLKALDEQRRALLVQTEELKAQRNIASAAIAQAKRQKKDASQQIADMQQLAANIKVIDAKLADIDQEITSIITVLPNTPHDSVPIGADEEDNVEIRRWGKPRQFDFDIKAHWDLGEALDILDWERGAKVTGARFLFYKNLGARLERALYNFMLDEHLKEGYQEIIPPYMVNHDSMFGTGQYPKFKEDTFELDGTNFVLIPTAEVPLTNYYRGDIIDGKELPIYFTAMSPSFRSEAGSAGRDTRGLIRLHQFHKVEMVKFAKPETSYDELEKMTANAEHILQKLKLPYRVLALCTGDMGFSAAKTYDLEVWIPAQNTYREISSCSNTEDFQARRAQIRYRDEADGKVKLLHTLNGSGLAVGRTVAAILENYQNEDGSVTIPEVLRPYMGGLELIKPR.

Residue 230–232 (TAE) participates in L-serine binding. 261–263 (RSE) lines the ATP pocket. Glu-284 contacts L-serine. 348–351 (EISS) provides a ligand contact to ATP. Ser-384 is an L-serine binding site.

It belongs to the class-II aminoacyl-tRNA synthetase family. Type-1 seryl-tRNA synthetase subfamily. In terms of assembly, homodimer. The tRNA molecule binds across the dimer.

Its subcellular location is the cytoplasm. The catalysed reaction is tRNA(Ser) + L-serine + ATP = L-seryl-tRNA(Ser) + AMP + diphosphate + H(+). It catalyses the reaction tRNA(Sec) + L-serine + ATP = L-seryl-tRNA(Sec) + AMP + diphosphate + H(+). It participates in aminoacyl-tRNA biosynthesis; selenocysteinyl-tRNA(Sec) biosynthesis; L-seryl-tRNA(Sec) from L-serine and tRNA(Sec): step 1/1. Its function is as follows. Catalyzes the attachment of serine to tRNA(Ser). Is also able to aminoacylate tRNA(Sec) with serine, to form the misacylated tRNA L-seryl-tRNA(Sec), which will be further converted into selenocysteinyl-tRNA(Sec). The protein is Serine--tRNA ligase of Streptococcus equi subsp. zooepidemicus (strain MGCS10565).